The following is a 328-amino-acid chain: Glyoxylate reductase/hydroxypyruvate reductase (328 aa).

Serine 36 is subject to Phosphoserine. 83–84 is a binding site for substrate; the sequence is VG. NADP(+) is bound by residues 162–164, 185–188, serine 217, and isoleucine 243; these read GRI and RQPR. Residues arginine 245 and aspartate 269 each contribute to the substrate site. Serine 272 is subject to Phosphoserine. Residue histidine 293 is the Proton donor of the active site. 293–296 is a binding site for substrate; the sequence is HIGS. Residue glycine 295 participates in NADP(+) binding. Threonine 298 is modified (phosphothreonine).

The protein belongs to the D-isomer specific 2-hydroxyacid dehydrogenase family. Homodimer. Ubiquitous. Most abundantly expressed in the liver.

It carries out the reaction glycolate + NADP(+) = glyoxylate + NADPH + H(+). The catalysed reaction is (R)-glycerate + NAD(+) = 3-hydroxypyruvate + NADH + H(+). It catalyses the reaction (R)-glycerate + NADP(+) = 3-hydroxypyruvate + NADPH + H(+). Functionally, enzyme with hydroxy-pyruvate reductase, glyoxylate reductase and D-glycerate dehydrogenase enzymatic activities. Reduces hydroxypyruvate to D-glycerate, glyoxylate to glycolate, oxidizes D-glycerate to hydroxypyruvate. This is Glyoxylate reductase/hydroxypyruvate reductase (GRHPR) from Homo sapiens (Human).